A 197-amino-acid polypeptide reads, in one-letter code: Probable GTP-binding protein EngB (197 aa).

The 173-residue stretch at 25 to 197 (SAPEIAFAGR…VRDEFFKFTR (173 aa)) folds into the EngB-type G domain. Residues 33 to 40 (GRSNVGKS), 60 to 64 (GCTRQ), 79 to 82 (DLPG), 146 to 149 (TKID), and 177 to 179 (ISV) contribute to the GTP site. The Mg(2+) site is built by Ser-40 and Thr-62.

Belongs to the TRAFAC class TrmE-Era-EngA-EngB-Septin-like GTPase superfamily. EngB GTPase family. The cofactor is Mg(2+).

Functionally, necessary for normal cell division and for the maintenance of normal septation. The protein is Probable GTP-binding protein EngB of Wolbachia sp. subsp. Brugia malayi (strain TRS).